The chain runs to 208 residues: Small ribosomal subunit protein eS8 (208 aa).

Residues 1–33 (MGISRDHWHKRRATGGKRKPIRKKRKFELGRPA) are disordered. Over residues 7–26 (HWHKRRATGGKRKPIRKKRK) the composition is skewed to basic residues.

This sequence belongs to the eukaryotic ribosomal protein eS8 family.

The polypeptide is Small ribosomal subunit protein eS8 (RpS8) (Apis mellifera (Honeybee)).